Here is a 271-residue protein sequence, read N- to C-terminus: Putative phosphoenolpyruvate synthase regulatory protein (271 aa).

151–158 is a binding site for ADP; the sequence is GVSRSGKT.

It belongs to the pyruvate, phosphate/water dikinase regulatory protein family. PSRP subfamily.

It carries out the reaction [pyruvate, water dikinase] + ADP = [pyruvate, water dikinase]-phosphate + AMP + H(+). The enzyme catalyses [pyruvate, water dikinase]-phosphate + phosphate + H(+) = [pyruvate, water dikinase] + diphosphate. Functionally, bifunctional serine/threonine kinase and phosphorylase involved in the regulation of the phosphoenolpyruvate synthase (PEPS) by catalyzing its phosphorylation/dephosphorylation. This Paraburkholderia phytofirmans (strain DSM 17436 / LMG 22146 / PsJN) (Burkholderia phytofirmans) protein is Putative phosphoenolpyruvate synthase regulatory protein.